Consider the following 195-residue polypeptide: Protein GrpE (195 aa).

It belongs to the GrpE family. In terms of assembly, homodimer.

It localises to the cytoplasm. In terms of biological role, participates actively in the response to hyperosmotic and heat shock by preventing the aggregation of stress-denatured proteins, in association with DnaK and GrpE. It is the nucleotide exchange factor for DnaK and may function as a thermosensor. Unfolded proteins bind initially to DnaJ; upon interaction with the DnaJ-bound protein, DnaK hydrolyzes its bound ATP, resulting in the formation of a stable complex. GrpE releases ADP from DnaK; ATP binding to DnaK triggers the release of the substrate protein, thus completing the reaction cycle. Several rounds of ATP-dependent interactions between DnaJ, DnaK and GrpE are required for fully efficient folding. The polypeptide is Protein GrpE (Francisella tularensis subsp. holarctica (strain OSU18)).